The following is a 583-amino-acid chain: 2-succinyl-5-enolpyruvyl-6-hydroxy-3-cyclohexene-1-carboxylate synthase (583 aa).

Belongs to the TPP enzyme family. MenD subfamily. As to quaternary structure, homodimer. It depends on Mg(2+) as a cofactor. Requires Mn(2+) as cofactor. The cofactor is thiamine diphosphate.

It carries out the reaction isochorismate + 2-oxoglutarate + H(+) = 5-enolpyruvoyl-6-hydroxy-2-succinyl-cyclohex-3-ene-1-carboxylate + CO2. It functions in the pathway quinol/quinone metabolism; 1,4-dihydroxy-2-naphthoate biosynthesis; 1,4-dihydroxy-2-naphthoate from chorismate: step 2/7. Its pathway is quinol/quinone metabolism; menaquinone biosynthesis. Catalyzes the thiamine diphosphate-dependent decarboxylation of 2-oxoglutarate and the subsequent addition of the resulting succinic semialdehyde-thiamine pyrophosphate anion to isochorismate to yield 2-succinyl-5-enolpyruvyl-6-hydroxy-3-cyclohexene-1-carboxylate (SEPHCHC). In Chlorobium limicola (strain DSM 245 / NBRC 103803 / 6330), this protein is 2-succinyl-5-enolpyruvyl-6-hydroxy-3-cyclohexene-1-carboxylate synthase.